A 210-amino-acid polypeptide reads, in one-letter code: S-norcoclaurine synthase (210 aa).

The first 19 residues, 1–19 (MMKMEVVFVFLMLLGTINC), serve as a signal peptide directing secretion. 108-110 (YKE) is a binding site for dopamine. Residue Lys-122 is the Proton donor of the active site. Asp-141 provides a ligand contact to (4-hydroxyphenyl)acetaldehyde.

Belongs to the BetVI family. Concentration-dependent dimerization, but mainly monomeric at concentrations around 10 uM. Expressed most abundantly in the rhizomes and to a lesser extent in petioles, roots, leaves and flower buds.

It carries out the reaction (4-hydroxyphenyl)acetaldehyde + dopamine = (S)-norcoclaurine + H2O. Involved in the biosynthesis of the common precursor of all benzylisoquinoline alkaloids such as morphine, sanguinarine, codeine or berberine. Condenses dopamine and 4-hydroxyphenylacetaldehyde. This chain is S-norcoclaurine synthase, found in Thalictrum flavum subsp. glaucum (Yellow meadow rue).